The following is a 404-amino-acid chain: Cysteine desulfurase IscS (404 aa).

Pyridoxal 5'-phosphate is bound by residues 75–76, N155, Q183, and 203–205; these read AT and SSH. K206 is subject to N6-(pyridoxal phosphate)lysine. T243 is a pyridoxal 5'-phosphate binding site. C328 acts as the Cysteine persulfide intermediate in catalysis. A [2Fe-2S] cluster-binding site is contributed by C328.

Belongs to the class-V pyridoxal-phosphate-dependent aminotransferase family. NifS/IscS subfamily. Homodimer. Forms a heterotetramer with IscU, interacts with other sulfur acceptors. Pyridoxal 5'-phosphate serves as cofactor.

It localises to the cytoplasm. The catalysed reaction is (sulfur carrier)-H + L-cysteine = (sulfur carrier)-SH + L-alanine. It functions in the pathway cofactor biosynthesis; iron-sulfur cluster biosynthesis. Its function is as follows. Master enzyme that delivers sulfur to a number of partners involved in Fe-S cluster assembly, tRNA modification or cofactor biosynthesis. Catalyzes the removal of elemental sulfur atoms from cysteine to produce alanine. Functions as a sulfur delivery protein for Fe-S cluster synthesis onto IscU, an Fe-S scaffold assembly protein, as well as other S acceptor proteins. In Histophilus somni (strain 129Pt) (Haemophilus somnus), this protein is Cysteine desulfurase IscS.